We begin with the raw amino-acid sequence, 683 residues long: Protein hook (683 aa).

Residues 5–123 form the Calponin-homology (CH) domain; the sequence is NGMYYSLLEW…RLLQLVLGCA (119 aa). Coiled-coil stretches lie at residues 135 to 440 and 484 to 594; these read EIMC…LKCG and QTAL…AKEV.

It belongs to the hook family. Homodimer. Interacts with microtubules via its N-terminus.

The protein localises to the cytoplasm. The protein resides in the cytoskeleton. It localises to the endosome. Its subcellular location is the synapse. In terms of biological role, involved in endocytic trafficking by stabilizing organelles of the endocytic pathway. Probably acts as a cytoskeletal linker protein required to tether endosome vesicles to the cytoskeleton. Involved in modulation of endocytosis at stages required for down-regulation of membrane proteins that control synapse size. Not involved in synaptic vesicle recycling. Required in R7 cells for boss endocytosis into multivesicular bodies (MVBs). Has a role in regulating adult longevity. The sequence is that of Protein hook from Drosophila grimshawi (Hawaiian fruit fly).